The following is a 521-amino-acid chain: Zinc finger and BTB domain-containing protein 18 (521 aa).

The region spanning 24–91 is the BTB domain; sequence CDCTVLVGDA…MYEGKLQFKD (68 aa). The tract at residues 190–230 is disordered; the sequence is DSASIPQTGGEAETHTAAAGKTADSPCSSTGSLSHRSATSM. Residues 197–212 are compositionally biased toward low complexity; sequence TGGEAETHTAAAGKTA. Polar residues predominate over residues 214-230; sequence SPCSSTGSLSHRSATSM. C2H2-type zinc fingers lie at residues 369 to 391, 409 to 431, 437 to 459, and 465 to 488; these read FMCP…LSTH, PTCS…ERTH, FTCT…AVVH, and HACK…RKFH.

This sequence belongs to the krueppel C2H2-type zinc-finger protein family. ZBTB18 subfamily.

It is found in the nucleus. In terms of biological role, transcriptional repressor that plays a role in various developmental processes. Specifically binds the consensus DNA sequence 5'-[AC]ACATCTG[GT][AC]-3' which contains the E box core, and acts by recruiting chromatin remodeling multiprotein complexes. The chain is Zinc finger and BTB domain-containing protein 18 (zbtb18) from Xenopus tropicalis (Western clawed frog).